A 264-amino-acid chain; its full sequence is ATP synthase subunit a (264 aa).

Transmembrane regions (helical) follow at residues 39–59, 97–117, 139–159, 205–225, and 239–259; these read LDTLIISVVLGALFILIFYIV, VAPLALTIFIWVFLMNFMDLV, TADPTLTFAMSITVFVLVIFY, LFGNLFAGELIFILIALLPWW, and LLVITVQAFIFMMLTVVYISL.

The protein belongs to the ATPase A chain family. In terms of assembly, F-type ATPases have 2 components, CF(1) - the catalytic core - and CF(0) - the membrane proton channel. CF(1) has five subunits: alpha(3), beta(3), gamma(1), delta(1), epsilon(1). CF(0) has three main subunits: a(1), b(2) and c(9-12). The alpha and beta chains form an alternating ring which encloses part of the gamma chain. CF(1) is attached to CF(0) by a central stalk formed by the gamma and epsilon chains, while a peripheral stalk is formed by the delta and b chains.

The protein localises to the cell inner membrane. Its function is as follows. Key component of the proton channel; it plays a direct role in the translocation of protons across the membrane. The chain is ATP synthase subunit a from Coxiella burnetii (strain CbuK_Q154) (Coxiella burnetii (strain Q154)).